The following is a 170-amino-acid chain: Small ribosomal subunit protein uS9 (170 aa).

It belongs to the universal ribosomal protein uS9 family.

In Rhodococcus opacus (strain B4), this protein is Small ribosomal subunit protein uS9.